Consider the following 146-residue polypeptide: NADH-quinone oxidoreductase subunit A (146 aa).

The next 3 helical transmembrane spans lie at 14–34 (FAVFFVVAIGLCCLMLMGAFF), 66–86 (FYLVAMFFVIFDVEALYLYAW), and 96–116 (VGFIEAAIFILVLLAGLVYLV).

The protein belongs to the complex I subunit 3 family. NDH-1 is composed of 13 different subunits. Subunits NuoA, H, J, K, L, M, N constitute the membrane sector of the complex.

It is found in the cell inner membrane. It catalyses the reaction a quinone + NADH + 5 H(+)(in) = a quinol + NAD(+) + 4 H(+)(out). Its function is as follows. NDH-1 shuttles electrons from NADH, via FMN and iron-sulfur (Fe-S) centers, to quinones in the respiratory chain. The immediate electron acceptor for the enzyme in this species is believed to be ubiquinone. Couples the redox reaction to proton translocation (for every two electrons transferred, four hydrogen ions are translocated across the cytoplasmic membrane), and thus conserves the redox energy in a proton gradient. The chain is NADH-quinone oxidoreductase subunit A from Serratia proteamaculans (strain 568).